A 946-amino-acid chain; its full sequence is Bifunctional glutamine synthetase adenylyltransferase/adenylyl-removing enzyme (946 aa).

The interval 1 to 440 is adenylyl removase; it reads MKPLSSPLQQ…VFNELIGDDE (440 aa). Residues 449–946 are adenylyl transferase; it reads SEQWRELWQD…ASWQKWLVEE (498 aa).

Belongs to the GlnE family. Requires Mg(2+) as cofactor.

It catalyses the reaction [glutamine synthetase]-O(4)-(5'-adenylyl)-L-tyrosine + phosphate = [glutamine synthetase]-L-tyrosine + ADP. It carries out the reaction [glutamine synthetase]-L-tyrosine + ATP = [glutamine synthetase]-O(4)-(5'-adenylyl)-L-tyrosine + diphosphate. Its function is as follows. Involved in the regulation of glutamine synthetase GlnA, a key enzyme in the process to assimilate ammonia. When cellular nitrogen levels are high, the C-terminal adenylyl transferase (AT) inactivates GlnA by covalent transfer of an adenylyl group from ATP to specific tyrosine residue of GlnA, thus reducing its activity. Conversely, when nitrogen levels are low, the N-terminal adenylyl removase (AR) activates GlnA by removing the adenylyl group by phosphorolysis, increasing its activity. The regulatory region of GlnE binds the signal transduction protein PII (GlnB) which indicates the nitrogen status of the cell. The chain is Bifunctional glutamine synthetase adenylyltransferase/adenylyl-removing enzyme from Shigella flexneri.